Consider the following 742-residue polypeptide: Photosystem I P700 chlorophyll a apoprotein A2 (742 aa).

Transmembrane regions (helical) follow at residues 46 to 69 (LFST…FHIA), 135 to 158 (LFQG…LHLQ), 175 to 199 (LNHH…HVAI), 273 to 291 (IAHH…GHMY), 336 to 359 (LHFQ…QHMG), 375 to 401 (SALY…IFFV), 423 to 445 (ALIS…IYVH), and 525 to 543 (FLVH…LILI). Residues Cys567 and Cys576 each contribute to the [4Fe-4S] cluster site. A run of 2 helical transmembrane segments spans residues 583–604 (ATYL…YWHW) and 651–673 (LSPW…MFLI). The divinyl chlorophyll a site is built by His662, Met670, and Tyr678. A phylloquinone-binding site is contributed by Trp679. The helical transmembrane segment at 715–735 (LVGLTHFTVGNFVTFGAFVIA) threads the bilayer.

This sequence belongs to the PsaA/PsaB family. As to quaternary structure, the PsaA/B heterodimer binds the P700 divinyl chlorophyll special pair and subsequent electron acceptors. PSI consists of a core antenna complex that captures photons, and an electron transfer chain that converts photonic excitation into a charge separation. The cyanobacterial PSI reaction center is composed of one copy each of PsaA,B,C,D,E,F,I,J,K,L,M and X, and forms trimeric complexes. PSI electron transfer chain: 5 divinyl chlorophyll a, 1 divinyl chlorophyll a', 2 phylloquinones and 3 4Fe-4S clusters. PSI core antenna: 90 divinyl chlorophyll a, 22 carotenoids, 3 phospholipids and 1 galactolipid. P700 is a divinyl chlorophyll a/divinyl chlorophyll a' dimer, A0 is one or more divinyl chlorophyll a, A1 is one or both phylloquinones and FX is a shared 4Fe-4S iron-sulfur center. serves as cofactor.

Its subcellular location is the cellular thylakoid membrane. It catalyses the reaction reduced [plastocyanin] + hnu + oxidized [2Fe-2S]-[ferredoxin] = oxidized [plastocyanin] + reduced [2Fe-2S]-[ferredoxin]. Its function is as follows. PsaA and PsaB bind P700, the primary electron donor of photosystem I (PSI), as well as the electron acceptors A0, A1 and FX. PSI is a plastocyanin/cytochrome c6-ferredoxin oxidoreductase, converting photonic excitation into a charge separation, which transfers an electron from the donor P700 chlorophyll pair to the spectroscopically characterized acceptors A0, A1, FX, FA and FB in turn. Oxidized P700 is reduced on the lumenal side of the thylakoid membrane by plastocyanin or cytochrome c6. The sequence is that of Photosystem I P700 chlorophyll a apoprotein A2 from Prochlorococcus marinus (strain NATL2A).